The chain runs to 729 residues: Polyribonucleotide nucleotidyltransferase (729 aa).

Residues Asp-485 and Asp-491 each coordinate Mg(2+). Residues 552-611 enclose the KH domain; that stretch reads PRITTMKVAEDKIRTIIGKGGATIKGLIESTGVSIDIDDSGVVQLFSPDKMALEEAQKQI. Residues 621-689 enclose the S1 motif domain; sequence GQTYQGKVSK…KQGRVKLEWK (69 aa).

It belongs to the polyribonucleotide nucleotidyltransferase family. In terms of assembly, component of the RNA degradosome, which is a multiprotein complex involved in RNA processing and mRNA degradation. Mg(2+) serves as cofactor.

Its subcellular location is the cytoplasm. It carries out the reaction RNA(n+1) + phosphate = RNA(n) + a ribonucleoside 5'-diphosphate. Functionally, involved in mRNA degradation. Catalyzes the phosphorolysis of single-stranded polyribonucleotides processively in the 3'- to 5'-direction. The chain is Polyribonucleotide nucleotidyltransferase from Legionella pneumophila subsp. pneumophila (strain Philadelphia 1 / ATCC 33152 / DSM 7513).